Reading from the N-terminus, the 217-residue chain is Tectonin-1 (217 aa).

6 repeat units span residues Val-2 to Gly-37, His-38 to Asn-74, Asn-75 to His-111, Asn-112 to Gly-146, Ser-147 to Gly-182, and Lys-183 to Leu-217. The tract at residues Val-2–Leu-217 is 6 X approximate tandem repeats.

It belongs to the tectonin family.

The protein resides in the cell surface. The protein localises to the cytoplasmic vesicle membrane. Its function is as follows. Probably involved in bacterial recognition. May be a lectin that function as part of a transmembrane signaling complex during phagocytosis. In Physarum polycephalum (Slime mold), this protein is Tectonin-1 (TECA).